The following is a 289-amino-acid chain: MKLSFTKMHGAGNDFVVLDGYSRALPPLTDALVRALADRHFGIGADQLLLVEKPTVDGADFKYRIFNCDGGEVEHCGNGARCFVKFVRDHGLTDKASVRVEVKHGVITLTMQDNGEVVVDMGAPVFEPARVPFDTSGLDGRREGADTLWPLPVNGATRWISVVSMGNPHAVQIVDDAEAFPVLADGPAIERDPRFPQRVNAGFMQIVSRHEVKLRVYERGAGETLACGTGACAAVAAGIRRGQLDSPVTVHTHGGTLTISWDGARDERAPLMMAGPATTVFEGVIDLPA.

Substrate contacts are provided by Asn-13, Gln-47, and Asn-67. Cys-76 (proton donor) is an active-site residue. Residues 77–78 (GN), Asn-167, Asn-200, and 218–219 (ER) each bind substrate. Catalysis depends on Cys-227, which acts as the Proton acceptor. 228–229 (GT) is a binding site for substrate.

This sequence belongs to the diaminopimelate epimerase family. Homodimer.

Its subcellular location is the cytoplasm. It carries out the reaction (2S,6S)-2,6-diaminopimelate = meso-2,6-diaminopimelate. It participates in amino-acid biosynthesis; L-lysine biosynthesis via DAP pathway; DL-2,6-diaminopimelate from LL-2,6-diaminopimelate: step 1/1. Its function is as follows. Catalyzes the stereoinversion of LL-2,6-diaminopimelate (L,L-DAP) to meso-diaminopimelate (meso-DAP), a precursor of L-lysine and an essential component of the bacterial peptidoglycan. The sequence is that of Diaminopimelate epimerase from Burkholderia thailandensis (strain ATCC 700388 / DSM 13276 / CCUG 48851 / CIP 106301 / E264).